The following is an 88-amino-acid chain: Large ribosomal subunit protein bL31B (88 aa).

It belongs to the bacterial ribosomal protein bL31 family. Type B subfamily. Part of the 50S ribosomal subunit.

This Corynebacterium diphtheriae (strain ATCC 700971 / NCTC 13129 / Biotype gravis) protein is Large ribosomal subunit protein bL31B.